A 199-amino-acid chain; its full sequence is UPF0329 protein ECU01_0120/ECU01_1490/ECU08_0050 (199 aa).

It belongs to the UPF0329 family.

The polypeptide is UPF0329 protein ECU01_0120/ECU01_1490/ECU08_0050 (Encephalitozoon cuniculi (strain GB-M1) (Microsporidian parasite)).